Here is a 220-residue protein sequence, read N- to C-terminus: Dual specificity phosphatase 29 (220 aa).

One can recognise a Tyrosine-protein phosphatase domain in the interval 54–202 (HVNEVWPKLY…LRELDKQLVQ (149 aa)). 146–153 (HCVMGRSR) serves as a coordination point for substrate. Residue C147 is the Phosphocysteine intermediate of the active site.

This sequence belongs to the protein-tyrosine phosphatase family. Non-receptor class dual specificity subfamily. In terms of assembly, homodimer. Interacts with PRKAA2.

It localises to the cytoplasm. Its subcellular location is the nucleus. The enzyme catalyses O-phospho-L-tyrosyl-[protein] + H2O = L-tyrosyl-[protein] + phosphate. The catalysed reaction is O-phospho-L-seryl-[protein] + H2O = L-seryl-[protein] + phosphate. It carries out the reaction O-phospho-L-threonyl-[protein] + H2O = L-threonyl-[protein] + phosphate. Functionally, dual specificity phosphatase able to dephosphorylate phosphotyrosine, phosphoserine and phosphothreonine residues within the same substrate, with a preference for phosphotyrosine as a substrate. Involved in the modulation of intracellular signaling cascades. In skeletal muscle regulates systemic glucose homeostasis by activating, AMPK, an energy sensor protein kinase. Affects MAP kinase signaling though modulation of the ERK1/2 cascade in skeletal muscle promoting muscle cell differentiation, development and atrophy. In Pan troglodytes (Chimpanzee), this protein is Dual specificity phosphatase 29 (DUSP29).